The sequence spans 351 residues: Holliday junction branch migration complex subunit RuvB (351 aa).

The tract at residues 1 to 22 (MSDPKANRMVSPERRSDDVGDT) is disordered. The large ATPase domain (RuvB-L) stretch occupies residues 2–185 (SDPKANRMVS…FGIPVRLNFY (184 aa)). Residues Leu24, Arg25, Gly66, Lys69, Thr70, Thr71, 132–134 (EDF), Arg175, Tyr185, and Arg222 contribute to the ATP site. Mg(2+) is bound at residue Thr70. Positions 186–256 (TIEELESIVS…IADHALSALE (71 aa)) are small ATPAse domain (RuvB-S). The segment at 259–351 (AAGLDAMDRR…GLFGTDESDD (93 aa)) is head domain (RuvB-H). 3 residues coordinate DNA: Arg295, Arg314, and Arg319.

Belongs to the RuvB family. As to quaternary structure, homohexamer. Forms an RuvA(8)-RuvB(12)-Holliday junction (HJ) complex. HJ DNA is sandwiched between 2 RuvA tetramers; dsDNA enters through RuvA and exits via RuvB. An RuvB hexamer assembles on each DNA strand where it exits the tetramer. Each RuvB hexamer is contacted by two RuvA subunits (via domain III) on 2 adjacent RuvB subunits; this complex drives branch migration. In the full resolvosome a probable DNA-RuvA(4)-RuvB(12)-RuvC(2) complex forms which resolves the HJ.

It localises to the cytoplasm. The catalysed reaction is ATP + H2O = ADP + phosphate + H(+). In terms of biological role, the RuvA-RuvB-RuvC complex processes Holliday junction (HJ) DNA during genetic recombination and DNA repair, while the RuvA-RuvB complex plays an important role in the rescue of blocked DNA replication forks via replication fork reversal (RFR). RuvA specifically binds to HJ cruciform DNA, conferring on it an open structure. The RuvB hexamer acts as an ATP-dependent pump, pulling dsDNA into and through the RuvAB complex. RuvB forms 2 homohexamers on either side of HJ DNA bound by 1 or 2 RuvA tetramers; 4 subunits per hexamer contact DNA at a time. Coordinated motions by a converter formed by DNA-disengaged RuvB subunits stimulates ATP hydrolysis and nucleotide exchange. Immobilization of the converter enables RuvB to convert the ATP-contained energy into a lever motion, pulling 2 nucleotides of DNA out of the RuvA tetramer per ATP hydrolyzed, thus driving DNA branch migration. The RuvB motors rotate together with the DNA substrate, which together with the progressing nucleotide cycle form the mechanistic basis for DNA recombination by continuous HJ branch migration. Branch migration allows RuvC to scan DNA until it finds its consensus sequence, where it cleaves and resolves cruciform DNA. The protein is Holliday junction branch migration complex subunit RuvB of Bradyrhizobium diazoefficiens (strain JCM 10833 / BCRC 13528 / IAM 13628 / NBRC 14792 / USDA 110).